Consider the following 244-residue polypeptide: Mediator of RNA polymerase II transcription subunit 9 (244 aa).

Residues 1–10 (MDQFSGGGGN) are compositionally biased toward gly residues. Disordered stretches follow at residues 1-28 (MDQF…TPTN) and 96-131 (QQRL…HTPQ). Over residues 13-28 (MIPNVQAQGNFGTPTN) the composition is skewed to polar residues. 2 stretches are compositionally biased toward low complexity: residues 96-111 (QQRL…QSLQ) and 122-131 (TPQSMMHTPQ). The stretch at 212 to 239 (KRNVEESEQLLQQRRDLIVEYRKSIEEI) forms a coiled coil.

This sequence belongs to the plant Mediator complex subunit 9 family. In terms of assembly, component of the Mediator complex. Interacts with MEE14/CBP1.

The protein localises to the nucleus. Component of the Mediator complex, a coactivator involved in the regulated transcription of nearly all RNA polymerase II-dependent genes. Mediator functions as a bridge to convey information from gene-specific regulatory proteins to the basal RNA polymerase II transcription machinery. The Mediator complex, having a compact conformation in its free form, is recruited to promoters by direct interactions with regulatory proteins and serves for the assembly of a functional pre-initiation complex with RNA polymerase II and the general transcription factors. This chain is Mediator of RNA polymerase II transcription subunit 9 (MED9), found in Arabidopsis thaliana (Mouse-ear cress).